A 371-amino-acid chain; its full sequence is Cytochrome b (371 aa).

Helical transmembrane passes span 25–45 (FGSM…FLAI), 69–90 (WTMQ…YTHI), 105–125 (WLSG…GYVL), and 170–190 (FFAL…VHII). The heme b site is built by His-75 and His-89. Positions 174 and 188 each coordinate heme b. Position 193 (His-193) interacts with a ubiquinone. A run of 4 helical transmembrane segments spans residues 218-238 (YKDM…MSFS), 280-300 (LGGT…PFTH), 312-332 (FTQL…WTAT), and 339-358 (FILI…IINP).

This sequence belongs to the cytochrome b family. As to quaternary structure, the cytochrome bc1 complex contains 3 respiratory subunits (MT-CYB, CYC1 and UQCRFS1), 2 core proteins (UQCRC1 and UQCRC2) and probably 6 low-molecular weight proteins. Heme b is required as a cofactor.

The protein localises to the mitochondrion inner membrane. Component of the ubiquinol-cytochrome c reductase complex (complex III or cytochrome b-c1 complex) that is part of the mitochondrial respiratory chain. The b-c1 complex mediates electron transfer from ubiquinol to cytochrome c. Contributes to the generation of a proton gradient across the mitochondrial membrane that is then used for ATP synthesis. The sequence is that of Cytochrome b (MT-CYB) from Elapognathus coronatus (Western crowned snake).